Here is a 335-residue protein sequence, read N- to C-terminus: Teichoic acids export ATP-binding protein TagH (335 aa).

The ABC transporter domain occupies isoleucine 26–lysine 246. An ATP-binding site is contributed by glycine 60–serine 67.

It belongs to the ABC transporter superfamily. Teichoic acids exporter (TC 3.A.1.104.1) family. As to quaternary structure, the complex is composed of two ATP-binding proteins (TagH) and two transmembrane proteins (TagG).

The protein resides in the cell membrane. The catalysed reaction is ATP + H2O + teichoic acidSide 1 = ADP + phosphate + teichoic acidSide 2.. Its function is as follows. Part of the ABC transporter complex TagGH involved in teichoic acids export. Responsible for energy coupling to the transport system. The sequence is that of Teichoic acids export ATP-binding protein TagH from Listeria monocytogenes serotype 4b (strain F2365).